The primary structure comprises 550 residues: Forkhead box protein N4 (550 aa).

A DNA-binding region (fork-head) is located at residues 231–327; sequence KPIYSYSCLI…EEMQKWKRKD (97 aa). The segment covering 402–411 has biased composition (low complexity); that stretch reads LQNQSRLAPS. The interval 402-437 is disordered; it reads LQNQSRLAPSSPAPAQTPPLHTVPDMTNSSLPQHPA.

In terms of tissue distribution, isoform 1 is expressed mainly in adult thymus. Isoform 2 is detected in adult skin. Isoform 3 is expressed in adult brain and embryo. Prominent expression sites include the olfactory placode, the basal layer of the olfactory epithelium, the neuroepithelium of the developing retina, the germinal zone of the differentiated eye, regions of motoneuron development in the neural tube and periventricular regions of the brain.

It is found in the nucleus. Its function is as follows. Transcription factor essential for neural and some non-neural tissues development. Binds to an 11-bp consensus sequence containing the invariant tetranucleotide 5'-ACGC-3'. During development of the central nervous system, required to specify the amacrine and horizontal cell fates from multipotent retinal progenitors while suppressing the alternative photoreceptor cell fates. Drives commitment of p2 progenitors to the V2b interneuron fates during spinal cord neurogenesis. In development of non-neural tissues, plays an essential role in the specification of the atrioventricular canal. The polypeptide is Forkhead box protein N4 (foxn4) (Danio rerio (Zebrafish)).